We begin with the raw amino-acid sequence, 249 residues long: Leucyl/phenylalanyl-tRNA--protein transferase (249 aa).

The protein belongs to the L/F-transferase family.

The protein localises to the cytoplasm. The catalysed reaction is N-terminal L-lysyl-[protein] + L-leucyl-tRNA(Leu) = N-terminal L-leucyl-L-lysyl-[protein] + tRNA(Leu) + H(+). It carries out the reaction N-terminal L-arginyl-[protein] + L-leucyl-tRNA(Leu) = N-terminal L-leucyl-L-arginyl-[protein] + tRNA(Leu) + H(+). The enzyme catalyses L-phenylalanyl-tRNA(Phe) + an N-terminal L-alpha-aminoacyl-[protein] = an N-terminal L-phenylalanyl-L-alpha-aminoacyl-[protein] + tRNA(Phe). Its function is as follows. Functions in the N-end rule pathway of protein degradation where it conjugates Leu, Phe and, less efficiently, Met from aminoacyl-tRNAs to the N-termini of proteins containing an N-terminal arginine or lysine. This Xanthomonas axonopodis pv. citri (strain 306) protein is Leucyl/phenylalanyl-tRNA--protein transferase.